Here is a 400-residue protein sequence, read N- to C-terminus: 1-deoxy-D-xylulose 5-phosphate reductoisomerase (400 aa).

The NADPH site is built by T17, G18, S19, I20, and N131. K132 contributes to the 1-deoxy-D-xylulose 5-phosphate binding site. An NADPH-binding site is contributed by E133. D157 contacts Mn(2+). 1-deoxy-D-xylulose 5-phosphate-binding residues include S158, E159, S188, and H211. Position 159 (E159) interacts with Mn(2+). Residue G217 coordinates NADPH. Residues S224, N229, K230, and E233 each coordinate 1-deoxy-D-xylulose 5-phosphate. Mn(2+) is bound at residue E233.

This sequence belongs to the DXR family. Mg(2+) serves as cofactor. The cofactor is Mn(2+).

It carries out the reaction 2-C-methyl-D-erythritol 4-phosphate + NADP(+) = 1-deoxy-D-xylulose 5-phosphate + NADPH + H(+). The protein operates within isoprenoid biosynthesis; isopentenyl diphosphate biosynthesis via DXP pathway; isopentenyl diphosphate from 1-deoxy-D-xylulose 5-phosphate: step 1/6. In terms of biological role, catalyzes the NADPH-dependent rearrangement and reduction of 1-deoxy-D-xylulose-5-phosphate (DXP) to 2-C-methyl-D-erythritol 4-phosphate (MEP). This Pseudomonas putida (strain ATCC 700007 / DSM 6899 / JCM 31910 / BCRC 17059 / LMG 24140 / F1) protein is 1-deoxy-D-xylulose 5-phosphate reductoisomerase.